Here is a 201-residue protein sequence, read N- to C-terminus: 3-isopropylmalate dehydratase small subunit (201 aa).

It belongs to the LeuD family. LeuD type 1 subfamily. In terms of assembly, heterodimer of LeuC and LeuD.

The enzyme catalyses (2R,3S)-3-isopropylmalate = (2S)-2-isopropylmalate. The protein operates within amino-acid biosynthesis; L-leucine biosynthesis; L-leucine from 3-methyl-2-oxobutanoate: step 2/4. In terms of biological role, catalyzes the isomerization between 2-isopropylmalate and 3-isopropylmalate, via the formation of 2-isopropylmaleate. The protein is 3-isopropylmalate dehydratase small subunit of Escherichia coli O127:H6 (strain E2348/69 / EPEC).